Consider the following 180-residue polypeptide: MSTNAIAKRYAKALVQLGSEAGSVDSFNAELTRFSALLTDSRDLSAVFANPAYGIESKREVMKELVAKLQLSPMISNLLMLLLERGRISVLPQISESYGAFADELSGVIRPTLSSGLPLEASQIEEIRSALAKSTGKKVELKVEVDPSLIGGVVTKIGGKVFDGSVRTQLARIQDILQKG.

The protein belongs to the ATPase delta chain family. In terms of assembly, F-type ATPases have 2 components, F(1) - the catalytic core - and F(0) - the membrane proton channel. F(1) has five subunits: alpha(3), beta(3), gamma(1), delta(1), epsilon(1). F(0) has three main subunits: a(1), b(2) and c(10-14). The alpha and beta chains form an alternating ring which encloses part of the gamma chain. F(1) is attached to F(0) by a central stalk formed by the gamma and epsilon chains, while a peripheral stalk is formed by the delta and b chains.

The protein localises to the cell inner membrane. Functionally, f(1)F(0) ATP synthase produces ATP from ADP in the presence of a proton or sodium gradient. F-type ATPases consist of two structural domains, F(1) containing the extramembraneous catalytic core and F(0) containing the membrane proton channel, linked together by a central stalk and a peripheral stalk. During catalysis, ATP synthesis in the catalytic domain of F(1) is coupled via a rotary mechanism of the central stalk subunits to proton translocation. In terms of biological role, this protein is part of the stalk that links CF(0) to CF(1). It either transmits conformational changes from CF(0) to CF(1) or is implicated in proton conduction. The sequence is that of ATP synthase subunit delta from Citrifermentans bemidjiense (strain ATCC BAA-1014 / DSM 16622 / JCM 12645 / Bem) (Geobacter bemidjiensis).